Here is a 140-residue protein sequence, read N- to C-terminus: GTP-dependent dephospho-CoA kinase (140 aa).

GTP is bound by residues aspartate 21, valine 22, valine 23, aspartate 40, lysine 42, and glutamate 92.

The protein belongs to the GTP-dependent DPCK family.

It catalyses the reaction 3'-dephospho-CoA + GTP = GDP + CoA + H(+). The protein operates within cofactor biosynthesis; coenzyme A biosynthesis. Its function is as follows. Catalyzes the GTP-dependent phosphorylation of the 3'-hydroxyl group of dephosphocoenzyme A to form coenzyme A (CoA). The chain is GTP-dependent dephospho-CoA kinase from Pyrobaculum aerophilum (strain ATCC 51768 / DSM 7523 / JCM 9630 / CIP 104966 / NBRC 100827 / IM2).